The sequence spans 745 residues: Centromere protein I (745 aa).

Residues 1-27 (MATPRLTRNSQQQNRISQGSNSRQTTL) show a composition bias toward polar residues. Residues 1 to 58 (MATPRLTRNSQQQNRISQGSNSRQTTLLDWKVKDKAGNSKSVLEESSSLEDSNHADDQ) form a disordered region. The span at 39–50 (SKSVLEESSSLE) shows a compositional bias: low complexity.

Belongs to the CENP-I/CTF3 family. In terms of assembly, component of the CENPA-CAD complex, composed of CENPI, CENPK, CENPL, CENPO, CENPP, CENPQ, CENPR and CENPS. The CENPA-CAD complex interacts with the CENPA-NAC complex, at least composed of CENPA, CENPC, CENPH, CENPM, CENPN, CENPT and CENPU. Interacts with SENP6. In terms of processing, sumoylated. Sumoylated form can be polyubiquitinated by RNF4, leading to its degradation. Desumoylation by SENP6 prevents its degradation. As to expression, highly expressed in testis, ovary and spleen. A much lower mRNA level is found in brain and lung, and no expression is detected in liver, kidney, heart, muscle, pituitary gland, prostate, epididymis and seminal vesicle.

It localises to the nucleus. The protein resides in the chromosome. The protein localises to the centromere. In terms of biological role, component of the CENPA-CAD (nucleosome distal) complex, a complex recruited to centromeres which is involved in assembly of kinetochore proteins, mitotic progression and chromosome segregation. May be involved in incorporation of newly synthesized CENPA into centromeres via its interaction with the CENPA-NAC complex. Required for the localization of CENPF, MAD1L1 and MAD2 (MAD2L1 or MAD2L2) to kinetochores. Involved in the response of gonadal tissues to follicle-stimulating hormone. The polypeptide is Centromere protein I (Cenpi) (Rattus norvegicus (Rat)).